A 195-amino-acid chain; its full sequence is 7-methyl-GTP pyrophosphatase (195 aa).

Asp71 (proton acceptor) is an active-site residue.

The protein belongs to the Maf family. YceF subfamily. The cofactor is a divalent metal cation.

It localises to the cytoplasm. It catalyses the reaction N(7)-methyl-GTP + H2O = N(7)-methyl-GMP + diphosphate + H(+). Nucleoside triphosphate pyrophosphatase that hydrolyzes 7-methyl-GTP (m(7)GTP). May have a dual role in cell division arrest and in preventing the incorporation of modified nucleotides into cellular nucleic acids. This chain is 7-methyl-GTP pyrophosphatase, found in Shewanella oneidensis (strain ATCC 700550 / JCM 31522 / CIP 106686 / LMG 19005 / NCIMB 14063 / MR-1).